The sequence spans 264 residues: Thymidylate synthase (264 aa).

Arg-21 serves as a coordination point for dUMP. Residue His-51 participates in (6R)-5,10-methylene-5,6,7,8-tetrahydrofolate binding. DUMP is bound at residue 126–127 (RR). The active-site Nucleophile is Cys-146. Residues 166 to 169 (RSAD), Asn-177, and 207 to 209 (HLY) each bind dUMP. Residue Asp-169 coordinates (6R)-5,10-methylene-5,6,7,8-tetrahydrofolate. Ala-263 contacts (6R)-5,10-methylene-5,6,7,8-tetrahydrofolate.

The protein belongs to the thymidylate synthase family. Bacterial-type ThyA subfamily. In terms of assembly, homodimer.

The protein localises to the cytoplasm. It carries out the reaction dUMP + (6R)-5,10-methylene-5,6,7,8-tetrahydrofolate = 7,8-dihydrofolate + dTMP. Its pathway is pyrimidine metabolism; dTTP biosynthesis. In terms of biological role, catalyzes the reductive methylation of 2'-deoxyuridine-5'-monophosphate (dUMP) to 2'-deoxythymidine-5'-monophosphate (dTMP) while utilizing 5,10-methylenetetrahydrofolate (mTHF) as the methyl donor and reductant in the reaction, yielding dihydrofolate (DHF) as a by-product. This enzymatic reaction provides an intracellular de novo source of dTMP, an essential precursor for DNA biosynthesis. The protein is Thymidylate synthase of Bdellovibrio bacteriovorus (strain ATCC 15356 / DSM 50701 / NCIMB 9529 / HD100).